The primary structure comprises 600 residues: Elongation factor 4 (600 aa).

The region spanning Lys5–Lys187 is the tr-type G domain. GTP-binding positions include Asp17–Thr22 and Asn134–Asp137.

It belongs to the TRAFAC class translation factor GTPase superfamily. Classic translation factor GTPase family. LepA subfamily.

The protein localises to the cell inner membrane. It carries out the reaction GTP + H2O = GDP + phosphate + H(+). Required for accurate and efficient protein synthesis under certain stress conditions. May act as a fidelity factor of the translation reaction, by catalyzing a one-codon backward translocation of tRNAs on improperly translocated ribosomes. Back-translocation proceeds from a post-translocation (POST) complex to a pre-translocation (PRE) complex, thus giving elongation factor G a second chance to translocate the tRNAs correctly. Binds to ribosomes in a GTP-dependent manner. This chain is Elongation factor 4, found in Rickettsia canadensis (strain McKiel).